A 235-amino-acid polypeptide reads, in one-letter code: MKFEPELESGKLIKRYKRFLADIKLDDNSERTIHCANTGAMTGCAEPDSTVFFSTSSNLKRKYPNSWELSVTENNHTICVNTLRSNQLVVEAIQDQNIKELTEYDELKTEVKYGSENSRIDILLTGKSLPDCYIEVKSVTLLSESGQGFFPDAVTTRGQKHLRELSEMAQLGHKAILFFAVLHSGIEKVSIAHHIDQQYHSLLIDAIENGVNILCYQAEMSSKEMKIVRKLPFSI.

It belongs to the SfsA family.

This is Sugar fermentation stimulation protein homolog from Aliivibrio fischeri (strain ATCC 700601 / ES114) (Vibrio fischeri).